The following is a 74-amino-acid chain: Protein SspS (74 aa).

It belongs to the alpha/beta-type SASP family.

This chain is Protein SspS (sspS), found in Streptococcus pyogenes.